The following is a 449-amino-acid chain: Tubulin alpha-2B chain (449 aa).

Gln11 contributes to the GTP binding site. At Lys40 the chain carries N6-acetyllysine. GTP is bound by residues Glu71, Ser140, Gly144, Thr145, Thr179, Asn206, and Asn228. Glu71 serves as a coordination point for Mg(2+). Residue Glu254 is part of the active site.

The protein belongs to the tubulin family. Dimer of alpha and beta chains. A typical microtubule is a hollow water-filled tube with an outer diameter of 25 nm and an inner diameter of 15 nM. Alpha-beta heterodimers associate head-to-tail to form protofilaments running lengthwise along the microtubule wall with the beta-tubulin subunit facing the microtubule plus end conferring a structural polarity. Microtubules usually have 13 protofilaments but different protofilament numbers can be found in some organisms and specialized cells. Mg(2+) is required as a cofactor. Post-translationally, acetylation of alpha chains at Lys-40 stabilizes microtubules and affects affinity and processivity of microtubule motors. This modification has a role in multiple cellular functions, ranging from cell motility, cell cycle progression or cell differentiation to intracellular trafficking and signaling.

Its subcellular location is the cytoplasm. It is found in the cytoskeleton. The protein localises to the spindle. It localises to the nucleus. It catalyses the reaction GTP + H2O = GDP + phosphate + H(+). Functionally, tubulin is the major constituent of microtubules, a cylinder consisting of laterally associated linear protofilaments composed of alpha- and beta-tubulin heterodimers. Microtubules grow by the addition of GTP-tubulin dimers to the microtubule end, where a stabilizing cap forms. Below the cap, tubulin dimers are in GDP-bound state, owing to GTPase activity of alpha-tubulin. This chain is Tubulin alpha-2B chain (ALTBE), found in Physarum polycephalum (Slime mold).